A 429-amino-acid polypeptide reads, in one-letter code: uncharacterized protein (429 aa).

Residues 1–12 (MSDSKEDIRNGQ) show a composition bias toward basic and acidic residues. Disordered regions lie at residues 1–63 (MSDS…APEA), 257–306 (RSRA…SDRM), and 320–429 (YRGY…SDSE). A compositionally biased stretch (acidic residues) spans 328 to 362 (EENEEDDLGDFIAEEEEEEEQEEEQEEDEEDEEEV). The segment covering 369–378 (KGFDADKEAS) has biased composition (basic and acidic residues).

The protein belongs to the LEO1 family.

The protein resides in the nucleus. This is an uncharacterized protein from Schizosaccharomyces pombe (strain 972 / ATCC 24843) (Fission yeast).